We begin with the raw amino-acid sequence, 219 residues long: Ribose-5-phosphate isomerase A (219 aa).

Residues T28–T31, D81–D84, and K94–G97 each bind substrate. E103 serves as the catalytic Proton acceptor. Substrate is bound at residue K121.

Belongs to the ribose 5-phosphate isomerase family. In terms of assembly, homodimer.

It catalyses the reaction aldehydo-D-ribose 5-phosphate = D-ribulose 5-phosphate. Its pathway is carbohydrate degradation; pentose phosphate pathway; D-ribose 5-phosphate from D-ribulose 5-phosphate (non-oxidative stage): step 1/1. Catalyzes the reversible conversion of ribose-5-phosphate to ribulose 5-phosphate. The protein is Ribose-5-phosphate isomerase A of Photorhabdus laumondii subsp. laumondii (strain DSM 15139 / CIP 105565 / TT01) (Photorhabdus luminescens subsp. laumondii).